Here is a 522-residue protein sequence, read N- to C-terminus: Bifunctional purine biosynthesis protein PurH (522 aa).

Residues 1–143 (MIRRALISVS…KNHARVAVVV (143 aa)) form the MGS-like domain.

It belongs to the PurH family.

The catalysed reaction is (6R)-10-formyltetrahydrofolate + 5-amino-1-(5-phospho-beta-D-ribosyl)imidazole-4-carboxamide = 5-formamido-1-(5-phospho-D-ribosyl)imidazole-4-carboxamide + (6S)-5,6,7,8-tetrahydrofolate. The enzyme catalyses IMP + H2O = 5-formamido-1-(5-phospho-D-ribosyl)imidazole-4-carboxamide. Its pathway is purine metabolism; IMP biosynthesis via de novo pathway; 5-formamido-1-(5-phospho-D-ribosyl)imidazole-4-carboxamide from 5-amino-1-(5-phospho-D-ribosyl)imidazole-4-carboxamide (10-formyl THF route): step 1/1. The protein operates within purine metabolism; IMP biosynthesis via de novo pathway; IMP from 5-formamido-1-(5-phospho-D-ribosyl)imidazole-4-carboxamide: step 1/1. The sequence is that of Bifunctional purine biosynthesis protein PurH from Sorangium cellulosum (strain So ce56) (Polyangium cellulosum (strain So ce56)).